We begin with the raw amino-acid sequence, 136 residues long: Large ribosomal subunit protein uL16 (136 aa).

Basic residues predominate over residues 1-17; that stretch reads MLQPKRTKFRKRHKGRN. Residues 1–21 are disordered; it reads MLQPKRTKFRKRHKGRNRGLA.

Belongs to the universal ribosomal protein uL16 family. In terms of assembly, part of the 50S ribosomal subunit.

Binds 23S rRNA and is also seen to make contacts with the A and possibly P site tRNAs. The polypeptide is Large ribosomal subunit protein uL16 (Buchnera aphidicola subsp. Acyrthosiphon kondoi (Acyrthosiphon kondoi symbiotic bacterium)).